The chain runs to 235 residues: Small ribosomal subunit protein uS2 (235 aa).

This sequence belongs to the universal ribosomal protein uS2 family.

This Thermoanaerobacter pseudethanolicus (strain ATCC 33223 / 39E) (Clostridium thermohydrosulfuricum) protein is Small ribosomal subunit protein uS2.